The chain runs to 201 residues: Glutathione peroxidase 1 (201 aa).

Residue serine 32 is modified to Phosphoserine. Selenocysteine 47 is an active-site residue. Selenocysteine 47 is a non-standard amino acid (selenocysteine). Lysine 86, lysine 112, and lysine 146 each carry N6-acetyllysine; alternate. 3 positions are modified to N6-succinyllysine; alternate: lysine 86, lysine 112, and lysine 146. Phosphoserine is present on residues serine 195 and serine 199.

It belongs to the glutathione peroxidase family. As to quaternary structure, homotetramer. Interacts with MIEN1. During periods of oxidative stress, Sec-47 may react with a superoxide radical, irreversibly lose hydroselenide and be converted to dehydroalanine.

Its subcellular location is the cytoplasm. It is found in the mitochondrion. The catalysed reaction is 2 glutathione + H2O2 = glutathione disulfide + 2 H2O. The enzyme catalyses a hydroperoxy polyunsaturated fatty acid + 2 glutathione = a hydroxy polyunsaturated fatty acid + glutathione disulfide + H2O. It catalyses the reaction tert-butyl hydroperoxide + 2 glutathione = tert-butanol + glutathione disulfide + H2O. It carries out the reaction cumene hydroperoxide + 2 glutathione = 2-phenylpropan-2-ol + glutathione disulfide + H2O. The catalysed reaction is (13S)-hydroperoxy-(9Z,11E)-octadecadienoate + 2 glutathione = (13S)-hydroxy-(9Z,11E)-octadecadienoate + glutathione disulfide + H2O. The enzyme catalyses (9S)-hydroperoxy-(10E,12Z)-octadecadienoate + 2 glutathione = (9S)-hydroxy-(10E,12Z)-octadecadienoate + glutathione disulfide + H2O. It catalyses the reaction (5S)-hydroperoxy-(6E,8Z,11Z,14Z)-eicosatetraenoate + 2 glutathione = (5S)-hydroxy-(6E,8Z,11Z,14Z)-eicosatetraenoate + glutathione disulfide + H2O. It carries out the reaction (12S)-hydroperoxy-(5Z,8Z,10E,14Z)-eicosatetraenoate + 2 glutathione = (12S)-hydroxy-(5Z,8Z,10E,14Z)-eicosatetraenoate + glutathione disulfide + H2O. The catalysed reaction is (12R)-hydroperoxy-(5Z,8Z,10E,14Z)-eicosatetraenoate + 2 glutathione = (12R)-hydroxy-(5Z,8Z,10E,14Z)-eicosatetraenoate + glutathione disulfide + H2O. The enzyme catalyses (15S)-hydroperoxy-(5Z,8Z,11Z,13E)-eicosatetraenoate + 2 glutathione = (15S)-hydroxy-(5Z,8Z,11Z,13E)-eicosatetraenoate + glutathione disulfide + H2O. It catalyses the reaction (5S)-hydroperoxy-(6E,8Z,11Z,14Z,17Z)-eicosapentaenoate + 2 glutathione = (5S)-hydroxy-(6E,8Z,11Z,14Z,17Z)-eicosapentaenoate + glutathione disulfide + H2O. It carries out the reaction (12S)-hydroperoxy-(5Z,8Z,10E,14Z,17Z)-eicosapentaenoate + 2 glutathione = (12S)-hydroxy-(5Z,8Z,10E,14Z,17Z)-eicosapentaenoate + glutathione disulfide + H2O. The catalysed reaction is (15S)-hydroperoxy-(5Z,8Z,11Z,13E,17Z)-eicosapentaenoate + 2 glutathione = (15S)-hydroxy-(5Z,8Z,11Z,13E,17Z)-eicosapentaenoate + glutathione disulfide + H2O. The enzyme catalyses (15S)-hydroperoxy-(11Z,13E)-eicosadienoate + 2 glutathione = (15S)-hydroxy-(11Z,13E)-eicosadienoate + glutathione disulfide + H2O. It catalyses the reaction (17S)-hydroperoxy-(4Z,7Z,10Z,13Z,15E,19Z)-docosahexaenoate + 2 glutathione = (17S)-hydroxy-(4Z,7Z,10Z,13Z,15E,19Z)-docosahexaenoate + glutathione disulfide + H2O. Functionally, catalyzes the reduction of hydroperoxides in a glutathione-dependent manner thus regulating cellular redox homeostasis. Can reduce small soluble hydroperoxides such as H2O2, cumene hydroperoxide and tert-butyl hydroperoxide, as well as several fatty acid-derived hydroperoxides. In platelets catalyzes the reduction of 12-hydroperoxyeicosatetraenoic acid, the primary product of the arachidonate 12-lipoxygenase pathway. This Pongo pygmaeus (Bornean orangutan) protein is Glutathione peroxidase 1 (GPX1).